Reading from the N-terminus, the 178-residue chain is RNA replicase polyprotein (178 aa).

It belongs to the tymovirus NS35 RNA replicase polyprotein family.

The catalysed reaction is RNA(n) + a ribonucleoside 5'-triphosphate = RNA(n+1) + diphosphate. This chain is RNA replicase polyprotein, found in Physalis heterophylla (PhMV).